Reading from the N-terminus, the 121-residue chain is Large ribosomal subunit protein uL18 (121 aa).

The protein belongs to the universal ribosomal protein uL18 family. In terms of assembly, part of the 50S ribosomal subunit; part of the 5S rRNA/L5/L18/L25 subcomplex. Contacts the 5S and 23S rRNAs.

Functionally, this is one of the proteins that bind and probably mediate the attachment of the 5S RNA into the large ribosomal subunit, where it forms part of the central protuberance. The protein is Large ribosomal subunit protein uL18 of Streptococcus suis (strain 98HAH33).